A 417-amino-acid polypeptide reads, in one-letter code: Peptide chain release factor subunit 1 (417 aa).

It belongs to the eukaryotic release factor 1 family. Heterodimer of two subunits, one of which binds GTP.

Its subcellular location is the cytoplasm. Functionally, directs the termination of nascent peptide synthesis (translation) in response to the termination codons UAA, UAG and UGA. This Thermoplasma acidophilum (strain ATCC 25905 / DSM 1728 / JCM 9062 / NBRC 15155 / AMRC-C165) protein is Peptide chain release factor subunit 1 (prf1).